A 360-amino-acid chain; its full sequence is Phospho-N-acetylmuramoyl-pentapeptide-transferase (360 aa).

Transmembrane regions (helical) follow at residues 27-47 (IVSL…LIGW), 72-92 (PTMG…MWAY), 94-114 (SNPY…VGFV), 132-152 (WKYF…YCIG), 168-188 (IMPQ…VGTS), 199-219 (GLAI…AWAT), 236-256 (AGEL…FLWF), 263-283 (VFMG…IAVL), 288-308 (FLLV…ILQV), and 338-358 (VIVR…ATLK).

The protein belongs to the glycosyltransferase 4 family. MraY subfamily. The cofactor is Mg(2+).

It localises to the cell inner membrane. It carries out the reaction UDP-N-acetyl-alpha-D-muramoyl-L-alanyl-gamma-D-glutamyl-meso-2,6-diaminopimeloyl-D-alanyl-D-alanine + di-trans,octa-cis-undecaprenyl phosphate = di-trans,octa-cis-undecaprenyl diphospho-N-acetyl-alpha-D-muramoyl-L-alanyl-D-glutamyl-meso-2,6-diaminopimeloyl-D-alanyl-D-alanine + UMP. The protein operates within cell wall biogenesis; peptidoglycan biosynthesis. Its function is as follows. Catalyzes the initial step of the lipid cycle reactions in the biosynthesis of the cell wall peptidoglycan: transfers peptidoglycan precursor phospho-MurNAc-pentapeptide from UDP-MurNAc-pentapeptide onto the lipid carrier undecaprenyl phosphate, yielding undecaprenyl-pyrophosphoryl-MurNAc-pentapeptide, known as lipid I. In Edwardsiella ictaluri (strain 93-146), this protein is Phospho-N-acetylmuramoyl-pentapeptide-transferase.